A 399-amino-acid polypeptide reads, in one-letter code: Phosphoglycerate kinase (399 aa).

Substrate contacts are provided by residues 22 to 24 (DFN), Arg38, 61 to 64 (HLGR), Arg119, and Arg152. ATP contacts are provided by residues Lys205, Gly296, Glu327, and 353–356 (GGDT).

The protein belongs to the phosphoglycerate kinase family. Monomer.

It is found in the cytoplasm. The enzyme catalyses (2R)-3-phosphoglycerate + ATP = (2R)-3-phospho-glyceroyl phosphate + ADP. Its pathway is carbohydrate degradation; glycolysis; pyruvate from D-glyceraldehyde 3-phosphate: step 2/5. This chain is Phosphoglycerate kinase, found in Nitratiruptor sp. (strain SB155-2).